Here is a 192-residue protein sequence, read N- to C-terminus: uncharacterized protein (192 aa).

A Nudix hydrolase domain is found at 29 to 160; the sequence is HRQAAVLIPI…PLDIYRRGDS (132 aa). The short motif at 67 to 89 is the Nudix box element; it reads GAVDDTDASVIAAALREAEEEVA. E83 and E87 together coordinate Mg(2+).

The protein belongs to the Nudix hydrolase family. PCD1 subfamily. Mn(2+) serves as cofactor. Mg(2+) is required as a cofactor.

Functionally, probably mediates the hydrolysis of some nucleoside diphosphate derivatives. This is an uncharacterized protein from Escherichia coli O139:H28 (strain E24377A / ETEC).